We begin with the raw amino-acid sequence, 208 residues long: 3-demethoxyubiquinol 3-hydroxylase (208 aa).

The Fe cation site is built by E57, E87, H90, E139, E171, and H174.

It belongs to the COQ7 family. Fe cation is required as a cofactor.

The protein localises to the cell membrane. The enzyme catalyses a 5-methoxy-2-methyl-3-(all-trans-polyprenyl)benzene-1,4-diol + AH2 + O2 = a 3-demethylubiquinol + A + H2O. It functions in the pathway cofactor biosynthesis; ubiquinone biosynthesis. Catalyzes the hydroxylation of 2-nonaprenyl-3-methyl-6-methoxy-1,4-benzoquinol during ubiquinone biosynthesis. The polypeptide is 3-demethoxyubiquinol 3-hydroxylase (Nitrosospira multiformis (strain ATCC 25196 / NCIMB 11849 / C 71)).